The following is a 476-amino-acid chain: Glycogen synthase (476 aa).

Lys15 contacts ADP-alpha-D-glucose.

It belongs to the glycosyltransferase 1 family. Bacterial/plant glycogen synthase subfamily.

The enzyme catalyses [(1-&gt;4)-alpha-D-glucosyl](n) + ADP-alpha-D-glucose = [(1-&gt;4)-alpha-D-glucosyl](n+1) + ADP + H(+). Its pathway is glycan biosynthesis; glycogen biosynthesis. Functionally, synthesizes alpha-1,4-glucan chains using ADP-glucose. The protein is Glycogen synthase (glgA) of Haemophilus influenzae (strain ATCC 51907 / DSM 11121 / KW20 / Rd).